Reading from the N-terminus, the 259-residue chain is Isoprenyl transferase (259 aa).

Residue aspartate 33 is part of the active site. Aspartate 33 contributes to the Mg(2+) binding site. Substrate is bound by residues 34–37, tryptophan 38, histidine 51, and 79–81; these read GNRR and STE. Asparagine 82 (proton acceptor) is an active-site residue. Substrate contacts are provided by residues arginine 86, arginine 208, and 214–216; that span reads RMS. Glutamate 227 lines the Mg(2+) pocket.

This sequence belongs to the UPP synthase family. In terms of assembly, homodimer. Mg(2+) serves as cofactor.

In terms of biological role, catalyzes the condensation of isopentenyl diphosphate (IPP) with allylic pyrophosphates generating different type of terpenoids. The protein is Isoprenyl transferase of Streptomyces fradiae (Streptomyces roseoflavus).